Consider the following 413-residue polypeptide: Gamma-glutamyl phosphate reductase (413 aa).

It belongs to the gamma-glutamyl phosphate reductase family.

The protein localises to the cytoplasm. It carries out the reaction L-glutamate 5-semialdehyde + phosphate + NADP(+) = L-glutamyl 5-phosphate + NADPH + H(+). Its pathway is amino-acid biosynthesis; L-proline biosynthesis; L-glutamate 5-semialdehyde from L-glutamate: step 2/2. In terms of biological role, catalyzes the NADPH-dependent reduction of L-glutamate 5-phosphate into L-glutamate 5-semialdehyde and phosphate. The product spontaneously undergoes cyclization to form 1-pyrroline-5-carboxylate. The chain is Gamma-glutamyl phosphate reductase from Salinispora arenicola (strain CNS-205).